The chain runs to 267 residues: Large ribosomal subunit protein uL4 (267 aa).

The protein belongs to the universal ribosomal protein uL4 family. In terms of assembly, part of the 50S ribosomal subunit.

Its function is as follows. One of the primary rRNA binding proteins, this protein initially binds near the 5'-end of the 23S rRNA. It is important during the early stages of 50S assembly. It makes multiple contacts with different domains of the 23S rRNA in the assembled 50S subunit and ribosome. Functionally, forms part of the polypeptide exit tunnel. The protein is Large ribosomal subunit protein uL4 of Saccharolobus islandicus (strain M.16.27) (Sulfolobus islandicus).